The chain runs to 337 residues: Inositol 2-dehydrogenase (337 aa).

The protein belongs to the Gfo/Idh/MocA family. As to quaternary structure, homotetramer.

It catalyses the reaction myo-inositol + NAD(+) = scyllo-inosose + NADH + H(+). Its function is as follows. Involved in the oxidation of myo-inositol (MI) to 2-keto-myo-inositol (2KMI or 2-inosose). This is Inositol 2-dehydrogenase from Ralstonia nicotianae (strain ATCC BAA-1114 / GMI1000) (Ralstonia solanacearum).